Reading from the N-terminus, the 173-residue chain is Glucagon family neuropeptides (173 aa).

Positions 1–22 are cleaved as a signal peptide; sequence MSSKATLALLIYGIIMHYSVYS. The propeptide occupies 23 to 80; the sequence is SPLGLNYPNLRLENEVYDEDGNSLPALAFDSDQIAIRSPPSVADDLYTLYYPPEKGTE. Lysine 166 bears the Lysine amide mark. Residues 170–173 constitute a propeptide that is removed on maturation; sequence LGYL.

It belongs to the glucagon family.

The protein resides in the secreted. Primary role of GHRH is to release GH from the pituitary. Its function is as follows. PACAP plays pivotal roles as a neurotransmitter and/or a neuromodulator. This is Glucagon family neuropeptides from Oncorhynchus nerka (Sockeye salmon).